Consider the following 305-residue polypeptide: UPF0612 protein C337.02c (305 aa).

Coiled coils occupy residues 27 to 63 and 120 to 207; these read IERY…MKYE and NDMN…DARS.

This sequence belongs to the UPF0612 family.

This chain is UPF0612 protein C337.02c, found in Schizosaccharomyces pombe (strain 972 / ATCC 24843) (Fission yeast).